Here is a 164-residue protein sequence, read N- to C-terminus: MTQIDYTRAAKYFLLADFFKGFKLGMKYFFAPKVTINYPHEKGPLSPRFRGEHALRRYPNGEERCIACKLCEAICPAQAITIDAEPREDGSRRTTRYDIDMTKCIYCGFCQEACPVDAIVEGPNFEFATETREELYYDKEKLLANGERWESAIAHNLELDAPYR.

2 4Fe-4S ferredoxin-type domains span residues 55–85 (LRRYPNGEERCIACKLCEAICPAQAITIDAE) and 95–124 (TRYDIDMTKCIYCGFCQEACPVDAIVEGPN). The [4Fe-4S] cluster site is built by cysteine 65, cysteine 68, cysteine 71, cysteine 75, cysteine 104, cysteine 107, cysteine 110, and cysteine 114.

It belongs to the complex I 23 kDa subunit family. In terms of assembly, NDH-1 is composed of 14 different subunits. Subunits NuoA, H, J, K, L, M, N constitute the membrane sector of the complex. [4Fe-4S] cluster serves as cofactor.

It is found in the cell inner membrane. The enzyme catalyses a quinone + NADH + 5 H(+)(in) = a quinol + NAD(+) + 4 H(+)(out). NDH-1 shuttles electrons from NADH, via FMN and iron-sulfur (Fe-S) centers, to quinones in the respiratory chain. The immediate electron acceptor for the enzyme in this species is believed to be ubiquinone. Couples the redox reaction to proton translocation (for every two electrons transferred, four hydrogen ions are translocated across the cytoplasmic membrane), and thus conserves the redox energy in a proton gradient. In Jannaschia sp. (strain CCS1), this protein is NADH-quinone oxidoreductase subunit I.